The sequence spans 201 residues: CASP-like protein 1E1 (201 aa).

The Cytoplasmic portion of the chain corresponds to 1 to 36 (MESQFRPGFDVSQGAGGRASKFGDVVAPTSSTQLPG). Residues 37–57 (IILRIVAIVLTFISAVVMGAA) form a helical membrane-spanning segment. The Extracellular segment spans residues 58–87 (RQTTTVTGIDAETALLTSITVTVKSTYSAA). The helical transmembrane segment at 88 to 108 (YVYFVVANVLVFFYSVVSLVL) threads the bilayer. Residues 109–127 (SMVNKARLTSMSLPFSIAD) are Cytoplasmic-facing. Residues 128 to 148 (LLMVVLLFSSNGAAAAISVVA) traverse the membrane as a helical segment. Over 149 to 173 (EKGQQNLAGWDKICNLFGGLCARVN) the chain is Extracellular. Residues 174-194 (AAIVLSMLASVAYVILVVFGM) form a helical membrane-spanning segment. At 195 to 201 (ANLRRSQ) the chain is on the cytoplasmic side.

This sequence belongs to the Casparian strip membrane proteins (CASP) family. As to quaternary structure, homodimer and heterodimers.

The protein resides in the cell membrane. This chain is CASP-like protein 1E1, found in Musa acuminata (Banana).